The following is a 990-amino-acid chain: Pentatricopeptide repeat-containing protein At4g33170 (990 aa).

PPR repeat units lie at residues 73–107, 109–139, 144–178, 179–209, 210–244, 279–313, 314–348, 349–379, 380–414, 415–450, 451–477, 481–515, 516–550, 551–581, 582–616, 617–651, 652–682, 683–717, 718–753, and 754–788; these read ERFL…DLVS, NSIL…LRQD, SRMT…GLDG, DEFV…MPYR, DVVL…GLNP, EIIF…DVEC, DQVT…GLDL, MLTV…MSER, DLIS…GLKP, DQYT…NNVS, DSFV…LFER, DLVA…GERS, DDFT…GYDL, DLWV…IPVP, DDVA…GVLP, DEFT…NCTN, DPFV…IEMM, NITA…GIKP, DKVT…GIKP, and EIEH…ASAS. The type E motif stretch occupies residues 789–864; that stretch reads MYRTLLAACR…DPGFSWIEVK (76 aa). Positions 865–895 are type E(+) motif; sequence NKIHIFVVDDRSNRQTELIYRKVKDMIRDIK. The segment at 896–990 is type DYW motif; the sequence is QEGYVPETDF…DGICSCGDYW (95 aa).

It belongs to the PPR family. PCMP-H subfamily.

The protein is Pentatricopeptide repeat-containing protein At4g33170 (PCMP-H53) of Arabidopsis thaliana (Mouse-ear cress).